A 369-amino-acid polypeptide reads, in one-letter code: Nuclear pore complex-interacting protein family member A6 (369 aa).

The interval 151–170 (SMKEREHGEKERQVSEAEEN) is disordered.

This sequence belongs to the NPIP family.

This chain is Nuclear pore complex-interacting protein family member A6, found in Homo sapiens (Human).